A 64-amino-acid chain; its full sequence is Large ribosomal subunit protein bL35 (64 aa).

It belongs to the bacterial ribosomal protein bL35 family.

The sequence is that of Large ribosomal subunit protein bL35 from Clavibacter michiganensis subsp. michiganensis (strain NCPPB 382).